The sequence spans 96 residues: Co-chaperonin GroES (96 aa).

It belongs to the GroES chaperonin family. Heptamer of 7 subunits arranged in a ring. Interacts with the chaperonin GroEL.

Its subcellular location is the cytoplasm. Functionally, together with the chaperonin GroEL, plays an essential role in assisting protein folding. The GroEL-GroES system forms a nano-cage that allows encapsulation of the non-native substrate proteins and provides a physical environment optimized to promote and accelerate protein folding. GroES binds to the apical surface of the GroEL ring, thereby capping the opening of the GroEL channel. The chain is Co-chaperonin GroES from Buchnera aphidicola subsp. Schizaphis graminum (strain Sg).